A 339-amino-acid chain; its full sequence is Anthranilate phosphoribosyltransferase (339 aa).

5-phospho-alpha-D-ribose 1-diphosphate contacts are provided by residues glycine 82, 85-86 (GD), 92-95 (NIST), 110-118 (KHGNSSISS), and serine 122. Glycine 82 is a binding site for anthranilate. Serine 94 lines the Mg(2+) pocket. Position 113 (asparagine 113) interacts with anthranilate. Residue arginine 168 coordinates anthranilate. 2 residues coordinate Mg(2+): aspartate 227 and glutamate 228.

This sequence belongs to the anthranilate phosphoribosyltransferase family. As to quaternary structure, homodimer. Mg(2+) serves as cofactor.

It carries out the reaction N-(5-phospho-beta-D-ribosyl)anthranilate + diphosphate = 5-phospho-alpha-D-ribose 1-diphosphate + anthranilate. Its pathway is amino-acid biosynthesis; L-tryptophan biosynthesis; L-tryptophan from chorismate: step 2/5. Functionally, catalyzes the transfer of the phosphoribosyl group of 5-phosphorylribose-1-pyrophosphate (PRPP) to anthranilate to yield N-(5'-phosphoribosyl)-anthranilate (PRA). This chain is Anthranilate phosphoribosyltransferase, found in Ruthia magnifica subsp. Calyptogena magnifica.